The chain runs to 117 residues: NYGESGIVYPDGRLVQFTRAEADNIAEIGEAGVVMHDGTHVQFDRDMAAHHAGTPPQPMPERVTLDQSYGYSGIIMPDGNNRQFTAAESDNLVLVGPSGAVTADGKNVQFTDDGLPT.

A run of 4 repeats spans residues 1 to 17, 26 to 43, 67 to 84, and 93 to 110.

As to expression, calcified shell.

The chain is Cuticle protein CP1246 from Cancer pagurus (Rock crab).